The following is a 1052-amino-acid chain: Fibroblast growth factor receptor homolog 2 (1052 aa).

Residues 1-19 form the signal peptide; that stretch reads MAKVPITLVMIIAIVSAAA. Over 20–600 the chain is Extracellular; that stretch reads DLGCDYGHHR…EIYALLHAHP (581 aa). 3 Ig-like C2-type domains span residues 23-117, 124-230, and 240-340; these read CDYG…IASF, PALP…PTQL, and PMLK…RTVA. Cysteine 30 and cysteine 90 form a disulfide bridge. Asparagine 99, asparagine 137, asparagine 175, asparagine 181, asparagine 249, and asparagine 257 each carry an N-linked (GlcNAc...) asparagine glycan. Cysteine 164 and cysteine 217 are joined by a disulfide. A disulfide bond links cysteine 262 and cysteine 329. Positions 358 to 372 are enriched in low complexity; that stretch reads TTTTTVASPIPTAST. The segment at 358–393 is disordered; that stretch reads TTTTTVASPIPTASTGEDNDDDVENPAAEASGGVGP. Ig-like C2-type domains are found at residues 393 to 478 and 487 to 585; these read PPVF…FSVQ and PIIV…RVVS. Residues cysteine 416 and cysteine 462 are joined by a disulfide bond. N-linked (GlcNAc...) asparagine glycosylation is found at asparagine 423, asparagine 444, asparagine 494, asparagine 500, asparagine 526, asparagine 541, asparagine 546, asparagine 555, and asparagine 576. An intrachain disulfide couples cysteine 507 to cysteine 566. A helical membrane pass occupies residues 601-626; sequence LGFTLAAITIVALFLLGSAFITFMLR. Topologically, residues 627 to 1052 are cytoplasmic; sequence RLRREKLLKL…LRYQYTYKFN (426 aa). The Protein kinase domain occupies 712–1000; it reads LSLGSILGEG…ELVESFDGIL (289 aa). ATP is bound by residues 718–726 and lysine 748; that span reads LGEGAFGRV. Aspartate 864 acts as the Proton acceptor in catalysis. Phosphotyrosine; by autocatalysis is present on tyrosine 895. Positions 1017 to 1038 are disordered; sequence PMLETPPSSGDEDDGSDTETFR.

The protein belongs to the protein kinase superfamily. Tyr protein kinase family. Fibroblast growth factor receptor subfamily. In terms of tissue distribution, during embryogenesis, expression is seen in mesoderm, endodermal precursor cells, CNS midline cells and trachea and salivary duct ectodermal cells.

It localises to the membrane. It carries out the reaction L-tyrosyl-[protein] + ATP = O-phospho-L-tyrosyl-[protein] + ADP + H(+). In terms of biological role, may be required for patterning of muscle precursor cells: generation of mesodermal and endodermal layers, invaginations of various types of cells, and CNS formation. Essential for the ability of the migrating tracheal and midline cells to recognize external guiding cues. This chain is Fibroblast growth factor receptor homolog 2 (btl), found in Drosophila melanogaster (Fruit fly).